Here is a 31-residue protein sequence, read N- to C-terminus: Cyclotide vinc-B (31 aa).

A cross-link (cyclopeptide (Gly-Asn)) is located at residues 1-31 (GSIPACGESCFKGKCYTPGCTCSKYPLCAKN). 3 disulfides stabilise this stretch: C6/C20, C10/C22, and C15/C28.

The protein belongs to the cyclotide family. This is a cyclic peptide.

In terms of biological role, probably participates in a plant defense mechanism. This Viola inconspicua protein is Cyclotide vinc-B.